A 120-amino-acid chain; its full sequence is Seripauperin-8 (120 aa).

Positions 1–20 are cleaved as a signal peptide; that stretch reads MVKLTSIAAGVAAIAATASA.

The protein belongs to the SRP1/TIP1 family. Seripauperin subfamily.

The sequence is that of Seripauperin-8 (PAU8) from Saccharomyces cerevisiae (strain ATCC 204508 / S288c) (Baker's yeast).